The primary structure comprises 333 residues: Chlorophyllide reductase 35.5 kDa chain (333 aa).

The tract at residues Met-1 to Pro-22 is disordered. ATP is bound by residues Gly-45 to Phe-50 and Lys-74. A Mg(2+)-binding site is contributed by Ser-49. Positions 130 and 165 each coordinate [4Fe-4S] cluster. Asn-219 to Lys-220 serves as a coordination point for ATP.

It belongs to the NifH/BchL/ChlL family. In terms of assembly, homodimer. Chlorophyllide reductase is composed of three subunits; BchX, BchY and BchZ. Requires [4Fe-4S] cluster as cofactor.

The enzyme catalyses 3-deacetyl-3-vinylbacteriochlorophyllide a + 2 oxidized [2Fe-2S]-[ferredoxin] + ADP + phosphate = chlorophyllide a + 2 reduced [2Fe-2S]-[ferredoxin] + ATP + H2O + H(+). It catalyses the reaction bacteriochlorophyllide a + 2 oxidized [2Fe-2S]-[ferredoxin] + ADP + phosphate = 3-acetyl-3-devinylchlorophyllide a + 2 reduced [2Fe-2S]-[ferredoxin] + ATP + H2O + H(+). It carries out the reaction 3-deacetyl-3-(1-hydroxyethyl)bacteriochlorophyllide a + 2 oxidized [2Fe-2S]-[ferredoxin] + ADP + phosphate = 3-devinyl-3-(1-hydroxyethyl)chlorophyllide a + 2 reduced [2Fe-2S]-[ferredoxin] + ATP + H2O + H(+). It functions in the pathway porphyrin-containing compound metabolism; bacteriochlorophyll biosynthesis. Converts chlorophylls (Chl) into bacteriochlorophylls (BChl) by reducing ring B of the tetrapyrrole. The chain is Chlorophyllide reductase 35.5 kDa chain (bchX) from Rhodobacter capsulatus (strain ATCC BAA-309 / NBRC 16581 / SB1003).